Here is a 125-residue protein sequence, read N- to C-terminus: Histone H1-like protein Hc1 (125 aa).

Residues 98–125 (TKAKVKPTKKAAPKTKVKTAKKTRSTKK) are disordered. Basic residues predominate over residues 100 to 125 (AKVKPTKKAAPKTKVKTAKKTRSTKK).

Belongs to the histone H1/H5 family. HCT subfamily.

Its function is as follows. Might have a role analogous to that of eukaryotic histone proteins. The chain is Histone H1-like protein Hc1 (hctA) from Chlamydia trachomatis serovar D (strain ATCC VR-885 / DSM 19411 / UW-3/Cx).